The chain runs to 127 residues: Ribosome-binding factor A (127 aa).

This sequence belongs to the RbfA family. Monomer. Binds 30S ribosomal subunits, but not 50S ribosomal subunits or 70S ribosomes.

The protein localises to the cytoplasm. In terms of biological role, one of several proteins that assist in the late maturation steps of the functional core of the 30S ribosomal subunit. Associates with free 30S ribosomal subunits (but not with 30S subunits that are part of 70S ribosomes or polysomes). Required for efficient processing of 16S rRNA. May interact with the 5'-terminal helix region of 16S rRNA. The sequence is that of Ribosome-binding factor A from Stenotrophomonas maltophilia (strain K279a).